Consider the following 634-residue polypeptide: Knob-associated histidine-rich protein (634 aa).

Positions 1-34 (MKSFKNKNTLRRKKAFPVFTKILLVSFLVWVLKC) are cleaved as a signal peptide. An N-linked (GlcNAc...) asparagine glycan is attached at Asn42. The span at 57 to 87 (AQKQHEHHHHHHHQHQHQHQAPHQAHHHHHH) shows a compositional bias: basic residues. Disordered regions lie at residues 57-143 (AQKQ…QVFR) and 347-634 (SSVN…GCCG). Positions 95-104 (PQVHQQVHGQ) are enriched in low complexity. Residues 108–117 (HHHHHHHHHQ) show a composition bias toward basic residues. 2 stretches are compositionally biased toward basic and acidic residues: residues 354–375 (KHGD…EGEK) and 396–405 (KDNEDAESVK). Over residues 406–422 (SKKHKSHDCEKKKSKKH) the composition is skewed to basic residues. Composition is skewed to basic and acidic residues over residues 423–444 (KDNE…GEKH) and 453–493 (KTNE…KKVD). Polar residues predominate over residues 494-505 (STSADNKSTNAA). The segment covering 509–520 (AKDKTQGGKTDK) has biased composition (basic and acidic residues). A run of 4 repeats spans residues 540–549 (TKGATKEAST), 550–559 (SKEATKEAST), 560–569 (SKGATKEAST), and 570–579 (TEGATKGAST). The segment at 540-580 (TKGATKEASTSKEATKEASTSKGATKEASTTEGATKGASTT) is 4 X 10 AA tandem repeats of [TS]-[KE]-[GE]-A-T-K-[EG]-A-S-T. Positions 567-591 (ASTTEGATKGASTTAGSTTGATTGA) are enriched in low complexity. A compositionally biased stretch (polar residues) spans 605 to 620 (AANNGEQVMSRGQAQL). Basic residues predominate over residues 625–634 (KKKKKRGCCG).

It is found in the secreted. Functionally, KAHRP might mimick human histidine-rich glycoproteins to anchor host thrombospondin or a parasite analog in a binding complex with the endothelial cell receptor. In Plasmodium falciparum (isolate FCR-3 / Gambia), this protein is Knob-associated histidine-rich protein.